A 404-amino-acid chain; its full sequence is MIKSILDNDLYKFTMQMAVLELFPKAEAEYRFTNRGSHHFSEEFVEKLRRVIDEDISALMLTEDEYQWLGENCSFLKPMYLEYLKNFRFKPGEVEVCLTEEKELDIRIKGPWHSTILWEIVLMAAVSELYFTTIEKEWNGKEWDGNISATSESILTAYGEKILEIGKILEENGCLFAEFGTRRRRSFELHDQVMKTLLQIETLTGTSNVFFAKKYGLKPIGTVGHEWIMGTSALIGLRYANRFAFENWVEVYKGDLGIALTDTFGSEAFFKDMDLKLSKIYDGFRHDSGDPFTFVDRVIDHYRKMGIDPMKKVIVFSDALNAEAAIRLKKYCQDKINCSFGIGTSLTNNSEFFRESPPLNMVIKLHSVNGIPVVKLSDSPEKETGERDALRVANYIVGRKGLDE.

Position 225 is a phosphohistidine; by autocatalysis (histidine 225).

It belongs to the NAPRTase family. Post-translationally, transiently phosphorylated on a His residue during the reaction cycle. Phosphorylation strongly increases the affinity for substrates and increases the rate of nicotinate D-ribonucleotide production. Dephosphorylation regenerates the low-affinity form of the enzyme, leading to product release.

It carries out the reaction nicotinate + 5-phospho-alpha-D-ribose 1-diphosphate + ATP + H2O = nicotinate beta-D-ribonucleotide + ADP + phosphate + diphosphate. The protein operates within cofactor biosynthesis; NAD(+) biosynthesis; nicotinate D-ribonucleotide from nicotinate: step 1/1. Catalyzes the synthesis of beta-nicotinate D-ribonucleotide from nicotinate and 5-phospho-D-ribose 1-phosphate at the expense of ATP. The chain is Nicotinate phosphoribosyltransferase from Methanosarcina acetivorans (strain ATCC 35395 / DSM 2834 / JCM 12185 / C2A).